A 464-amino-acid polypeptide reads, in one-letter code: Pup--protein ligase (464 aa).

Residue Glu-14 coordinates Mg(2+). Arg-58 provides a ligand contact to ATP. Tyr-60 contributes to the Mg(2+) binding site. Asp-62 functions as the Proton acceptor in the catalytic mechanism. Residue Glu-68 participates in Mg(2+) binding. ATP-binding residues include Thr-71 and Trp-430.

The protein belongs to the Pup ligase/Pup deamidase family. Pup-conjugating enzyme subfamily.

The catalysed reaction is ATP + [prokaryotic ubiquitin-like protein]-L-glutamate + [protein]-L-lysine = ADP + phosphate + N(6)-([prokaryotic ubiquitin-like protein]-gamma-L-glutamyl)-[protein]-L-lysine.. The protein operates within protein degradation; proteasomal Pup-dependent pathway. Its pathway is protein modification; protein pupylation. In terms of biological role, catalyzes the covalent attachment of the prokaryotic ubiquitin-like protein modifier Pup to the proteasomal substrate proteins, thereby targeting them for proteasomal degradation. This tagging system is termed pupylation. The ligation reaction involves the side-chain carboxylate of the C-terminal glutamate of Pup and the side-chain amino group of a substrate lysine. The chain is Pup--protein ligase from Micrococcus luteus (strain ATCC 4698 / DSM 20030 / JCM 1464 / CCM 169 / CCUG 5858 / IAM 1056 / NBRC 3333 / NCIMB 9278 / NCTC 2665 / VKM Ac-2230) (Micrococcus lysodeikticus).